A 593-amino-acid chain; its full sequence is Dihydroxy-acid dehydratase (593 aa).

Residues 1-17 are compositionally biased toward acidic residues; the sequence is MSQQTEPDDDAALDGDE. A disordered region spans residues 1–40; that stretch reads MSQQTEPDDDAALDGDEPGAYGKDERLRSREVTEGPERAP. Over residues 22-40 the composition is skewed to basic and acidic residues; sequence GKDERLRSREVTEGPERAP. Cys72 is a [2Fe-2S] cluster binding site. Position 104 (Asp104) interacts with Mg(2+). Cys145 lines the [2Fe-2S] cluster pocket. Mg(2+) is bound by residues Asp146 and Lys147. The residue at position 147 (Lys147) is an N6-carboxylysine. Cys217 provides a ligand contact to [2Fe-2S] cluster. Glu475 contacts Mg(2+). Catalysis depends on Ser501, which acts as the Proton acceptor.

It belongs to the IlvD/Edd family. Homodimer. It depends on [2Fe-2S] cluster as a cofactor. Mg(2+) is required as a cofactor.

The enzyme catalyses (2R)-2,3-dihydroxy-3-methylbutanoate = 3-methyl-2-oxobutanoate + H2O. It catalyses the reaction (2R,3R)-2,3-dihydroxy-3-methylpentanoate = (S)-3-methyl-2-oxopentanoate + H2O. The protein operates within amino-acid biosynthesis; L-isoleucine biosynthesis; L-isoleucine from 2-oxobutanoate: step 3/4. Its pathway is amino-acid biosynthesis; L-valine biosynthesis; L-valine from pyruvate: step 3/4. Functionally, functions in the biosynthesis of branched-chain amino acids. Catalyzes the dehydration of (2R,3R)-2,3-dihydroxy-3-methylpentanoate (2,3-dihydroxy-3-methylvalerate) into 2-oxo-3-methylpentanoate (2-oxo-3-methylvalerate) and of (2R)-2,3-dihydroxy-3-methylbutanoate (2,3-dihydroxyisovalerate) into 2-oxo-3-methylbutanoate (2-oxoisovalerate), the penultimate precursor to L-isoleucine and L-valine, respectively. The chain is Dihydroxy-acid dehydratase from Natronomonas pharaonis (strain ATCC 35678 / DSM 2160 / CIP 103997 / JCM 8858 / NBRC 14720 / NCIMB 2260 / Gabara) (Halobacterium pharaonis).